The chain runs to 312 residues: Cytoplasmic dynein intermediate light chain DYN3 (312 aa).

The protein belongs to the dynein light intermediate chain DYN3 family. The dynein complex consists of at least two heavy chains and a number of intermediate and light chains. Interacts with DYN1.

The protein resides in the cytoplasm. It localises to the cytoskeleton. Functionally, component of the cytoplasmic dynein which acts as a motor for the intracellular retrograde motility of vesicles and organelles along microtubules. May play an important role in the proper orientation of the mitotic spindle into the budding daughter cell yeast. Probably required for normal progression of the cell cycle. This is Cytoplasmic dynein intermediate light chain DYN3 (DYN3) from Saccharomyces cerevisiae (strain ATCC 204508 / S288c) (Baker's yeast).